We begin with the raw amino-acid sequence, 87 residues long: Toxin ICK-41 (87 aa).

Positions 1 to 19 (MKPIVYMLLFCAFTVVILG) are cleaved as a signal peptide. 4 disulfides stabilise this stretch: C40/C54, C40/C77, C53/C66, and C80/C87.

Belongs to the neurotoxin 27 (Jztx-72) family. ICK-41 subfamily. As to expression, expressed by the venom gland.

The protein localises to the secreted. Functionally, probable neurotoxin with ion channel impairing activity. This chain is Toxin ICK-41, found in Trittame loki (Brush-footed trapdoor spider).